Consider the following 305-residue polypeptide: Probable aspartoacylase (305 aa).

The Zn(2+) site is built by H13 and E16. Substrate is bound by residues R55 and 62 to 63 (NR). H105 provides a ligand contact to Zn(2+). Substrate is bound by residues E163 and Y273.

This sequence belongs to the AspA/AstE family. Aspartoacylase subfamily. It depends on Zn(2+) as a cofactor.

The enzyme catalyses an N-acyl-L-aspartate + H2O = a carboxylate + L-aspartate. The sequence is that of Probable aspartoacylase from Prochlorococcus marinus (strain NATL1A).